The sequence spans 282 residues: Pantothenate synthetase (282 aa).

30 to 37 (MGYLHEGH) serves as a coordination point for ATP. Residue His37 is the Proton donor of the active site. Gln61 provides a ligand contact to (R)-pantoate. Residue Gln61 coordinates beta-alanine. 147 to 150 (GMKD) contacts ATP. Gln153 is a (R)-pantoate binding site. ATP contacts are provided by residues Val176 and 184-187 (KSSR).

The protein belongs to the pantothenate synthetase family. Homodimer.

It is found in the cytoplasm. The catalysed reaction is (R)-pantoate + beta-alanine + ATP = (R)-pantothenate + AMP + diphosphate + H(+). The protein operates within cofactor biosynthesis; (R)-pantothenate biosynthesis; (R)-pantothenate from (R)-pantoate and beta-alanine: step 1/1. Catalyzes the condensation of pantoate with beta-alanine in an ATP-dependent reaction via a pantoyl-adenylate intermediate. In Bacillus cereus (strain ATCC 14579 / DSM 31 / CCUG 7414 / JCM 2152 / NBRC 15305 / NCIMB 9373 / NCTC 2599 / NRRL B-3711), this protein is Pantothenate synthetase.